We begin with the raw amino-acid sequence, 573 residues long: Proline--tRNA ligase (573 aa).

It belongs to the class-II aminoacyl-tRNA synthetase family. ProS type 1 subfamily. Homodimer.

It is found in the cytoplasm. It catalyses the reaction tRNA(Pro) + L-proline + ATP = L-prolyl-tRNA(Pro) + AMP + diphosphate. Functionally, catalyzes the attachment of proline to tRNA(Pro) in a two-step reaction: proline is first activated by ATP to form Pro-AMP and then transferred to the acceptor end of tRNA(Pro). As ProRS can inadvertently accommodate and process non-cognate amino acids such as alanine and cysteine, to avoid such errors it has two additional distinct editing activities against alanine. One activity is designated as 'pretransfer' editing and involves the tRNA(Pro)-independent hydrolysis of activated Ala-AMP. The other activity is designated 'posttransfer' editing and involves deacylation of mischarged Ala-tRNA(Pro). The misacylated Cys-tRNA(Pro) is not edited by ProRS. This Geobacter sp. (strain M21) protein is Proline--tRNA ligase.